The chain runs to 103 residues: Small ribosomal subunit protein uS10 (103 aa).

Belongs to the universal ribosomal protein uS10 family. Part of the 30S ribosomal subunit.

Involved in the binding of tRNA to the ribosomes. The chain is Small ribosomal subunit protein uS10 from Polynucleobacter asymbioticus (strain DSM 18221 / CIP 109841 / QLW-P1DMWA-1) (Polynucleobacter necessarius subsp. asymbioticus).